The chain runs to 968 residues: MPFSLGQRWISDTESELGLGTVVGMEGRMVTVLFSATGENRLFSRSEAPLTRVIFNPGDKVESHDEWSLTVTEVEEKDNLIIYHGIHSETGEQASLRETLLNHNIRFNKPQDRLFAGQIDRMDRFGVRYQCQLLRNKLATSDLLGLQGPRVGLIPHQQWIAHEVGQRFAPRVLLADEVGLGKTIEAGLIIHQQLLTGRAERILVIVPDTLRHQWLVEMLRRFNLRFSVFDEDRCVEAYADNDNPFYTEQLVICSLELLRKKKRLEQALDADWDLMVVDEAHHLEWSEDAPSRAYKVVEALSEVVPGVLLLTATPDQLGHQSHFARLRLLDPDRFYDYPSFLKEEESYKDVATAADALACGESLSSEAIASLTQLLSEKDISDSINLIQDASANADKRNQAREELLQELLDRHGTGRVLYRNSRASVKGFPTRNLHIHPQPMPEQYVTASRVSAMMNKHLDTNAKVRQVLSPEKIYQDFDSGSASWWKFDPRVDWLIDFLKTNRSKKVLIIASQAETALSLEEALRTREGIQATVFHEGMSIIERDKAGAYFAQETGGAQALICSEIGSEGRNFQFASHLVLFDLPLNPDLLEQRIGRLDRIGQKNDVEIHLPYLAGTAQERLMQWYHQGLNAFECTCPSGHILFGEFSGELLETLTTDDESSLETLLDNTKSRYQELKVAMEQGRDKLLEINSHGGERANKLVESLAARDEDTQLIGSVIRLWDIIGVEQEDSGENAIVLHPSEHMMFPTYPGLPEDGITVTFDRDMALSRDDIALITQEHPIVQTGLDLITSSETGTTSVAVLKNKALPAGTVFLELIYMADASAPKSSQLYRYLPPTPIRILLDKSGNNLSDNVTYESFDRQLSAVNRHIASKLVTASQAILHPLFAKGETFAANELKLLTETAREKMTQQLTGELERLKALKAVNPNIRDEELTHLSEQMSELNRYLDSSQLQLDAIRLVLVSHA.

The Helicase ATP-binding domain occupies 163–332 (EVGQRFAPRV…FARLRLLDPD (170 aa)). Residue 176 to 183 (DEVGLGKT) coordinates ATP. Residues 278-281 (DEAH) carry the DEAH box motif. The Helicase C-terminal domain occupies 491 to 678 (RVDWLIDFLK…NTKSRYQELK (188 aa)).

Belongs to the SNF2/RAD54 helicase family. RapA subfamily. In terms of assembly, interacts with the RNAP. Has a higher affinity for the core RNAP than for the holoenzyme. Its ATPase activity is stimulated by binding to RNAP.

Its function is as follows. Transcription regulator that activates transcription by stimulating RNA polymerase (RNAP) recycling in case of stress conditions such as supercoiled DNA or high salt concentrations. Probably acts by releasing the RNAP, when it is trapped or immobilized on tightly supercoiled DNA. Does not activate transcription on linear DNA. Probably not involved in DNA repair. In Shewanella piezotolerans (strain WP3 / JCM 13877), this protein is RNA polymerase-associated protein RapA.